We begin with the raw amino-acid sequence, 537 residues long: MPFKCIFLTGGVVSSLGKGLTAASLALILERQRLNVAMLKLDPYLNVDPGTMNPFEHGEIYVTDDGVETDLDLGHYHRFSSAALSRHSSATSGQIYARVIKREREGDYLGSTVQVIPHITNEIIQVILDAAKEHSPDVLIVEIGGTIGDIESLPFLEAIRQFRYDHSEDCLNIHMTYVPYLQAADEVKSKPTQHSVQTLRGIGIIPDAILCRSEKPLTQEVKSKISLFCNVPNRAVFNVIDVKHTIYEMPLMLAQEKIANFIGEKLKLATVPENLDDWRVLVNQLSQDLPKVKIGVVGKYVQHRDAYKSIFEALTHAALRLGHAAEIIPIDAEDENLTMELSQCDACLVPGGFGVRGWEGKIAAAKFCREQGIPYFGICLGMQVLVVEYARNVLNLDQANSLEMDPNTPHPIVYVMEGQDPLVATGGTMRLGAYPCLLKPGSKAHKAYNESSLIQERHRHRYEVNPDYIQSLEDHGLRIVGTCPPQGLCEIIEVSDHPWMIGVQFHPEFVSKLISPHPLFIAFIEAALVYSKDASHV.

An amidoligase domain region spans residues 1 to 268 (MPFKCIFLTG…ANFIGEKLKL (268 aa)). Ser14 contributes to the CTP binding site. A UTP-binding site is contributed by Ser14. Residues 15–20 (SLGKGL) and Asp72 contribute to the ATP site. Mg(2+) contacts are provided by Asp72 and Glu142. Residues 149-151 (DIE), 188-193 (KSKPTQ), and Lys224 each bind CTP. UTP-binding positions include 188–193 (KSKPTQ) and Lys224. Positions 293–533 (KIGVVGKYVQ…IEAALVYSKD (241 aa)) constitute a Glutamine amidotransferase type-1 domain. Gly352 contacts L-glutamine. Cys379 acts as the Nucleophile; for glutamine hydrolysis in catalysis. Residues 380 to 383 (LGMQ), Glu403, and Arg461 each bind L-glutamine. Residues His506 and Glu508 contribute to the active site.

This sequence belongs to the CTP synthase family. Homotetramer.

It catalyses the reaction UTP + L-glutamine + ATP + H2O = CTP + L-glutamate + ADP + phosphate + 2 H(+). The catalysed reaction is L-glutamine + H2O = L-glutamate + NH4(+). The enzyme catalyses UTP + NH4(+) + ATP = CTP + ADP + phosphate + 2 H(+). It participates in pyrimidine metabolism; CTP biosynthesis via de novo pathway; CTP from UDP: step 2/2. Allosterically activated by GTP, when glutamine is the substrate; GTP has no effect on the reaction when ammonia is the substrate. The allosteric effector GTP functions by stabilizing the protein conformation that binds the tetrahedral intermediate(s) formed during glutamine hydrolysis. Inhibited by the product CTP, via allosteric rather than competitive inhibition. Catalyzes the ATP-dependent amination of UTP to CTP with either L-glutamine or ammonia as the source of nitrogen. Regulates intracellular CTP levels through interactions with the four ribonucleotide triphosphates. The chain is CTP synthase from Chlamydia pneumoniae (Chlamydophila pneumoniae).